The chain runs to 341 residues: Methionine import ATP-binding protein MetN 1 (341 aa).

Positions 2–241 (IEFRQVSKSF…PKTTIAQNFV (240 aa)) constitute an ABC transporter domain. 38 to 45 (GYSGAGKS) is a binding site for ATP.

The protein belongs to the ABC transporter superfamily. Methionine importer (TC 3.A.1.24) family. In terms of assembly, the complex is composed of two ATP-binding proteins (MetN), two transmembrane proteins (MetI) and a solute-binding protein (MetQ).

The protein resides in the cell membrane. It carries out the reaction L-methionine(out) + ATP + H2O = L-methionine(in) + ADP + phosphate + H(+). The catalysed reaction is D-methionine(out) + ATP + H2O = D-methionine(in) + ADP + phosphate + H(+). Part of the ABC transporter complex MetNIQ involved in methionine import. Responsible for energy coupling to the transport system. The sequence is that of Methionine import ATP-binding protein MetN 1 from Staphylococcus aureus (strain bovine RF122 / ET3-1).